The primary structure comprises 90 residues: Small cell adhesion glycoprotein homolog (90 aa).

Over Met1–Lys27 the chain is Extracellular. Residues Ala28 to Ile48 traverse the membrane as a helical; Signal-anchor for type III membrane protein segment. The Cytoplasmic portion of the chain corresponds to Thr49–Met90.

This sequence belongs to the SMAGP family.

Its subcellular location is the cell membrane. The protein localises to the cytoplasmic vesicle membrane. May play a role in epithelial cell-cell contacts. The sequence is that of Small cell adhesion glycoprotein homolog (smagp) from Xenopus tropicalis (Western clawed frog).